Consider the following 159-residue polypeptide: Protein hunchback (159 aa).

Residues 18-34 (HNHHHHHHHGHHQHQQR) show a composition bias toward basic residues. Disordered stretches follow at residues 18–49 (HNHH…QSPL) and 119–159 (LTPP…KYMA). Basic and acidic residues predominate over residues 140–159 (EPEKEHDLMSNSSEDMKYMA).

The protein belongs to the hunchback C2H2-type zinc-finger protein family.

The protein resides in the nucleus. Functionally, gap class segmentation protein that controls development of head structures. In Drosophila soonae (Fruit fly), this protein is Protein hunchback (hb).